The primary structure comprises 894 residues: GTPase-activating protein GYP5 (894 aa).

Positions 1-23 are enriched in basic and acidic residues; that stretch reads MSSDKSIEKNTDTIASEVHEGDN. The disordered stretch occupies residues 1 to 324; sequence MSSDKSIEKN…VPPPLEEEMK (324 aa). Phosphoserine occurs at positions 25 and 30. The residue at position 89 (threonine 89) is a Phosphothreonine. Over residues 134–164 the composition is skewed to basic and acidic residues; it reads IEKEYDAVKENEKVYADTKEVVSSPENREVT. Composition is skewed to polar residues over residues 184 to 200 and 268 to 279; these read GTTTAANANDISISSEV and SSENEVSAIPTT. At serine 389 the chain carries Phosphoserine. Residues 451–630 form the Rab-GAP TBC domain; it reads GIPPQIRGII…RIFDIVFVEG (180 aa). Residues 732 to 872 adopt a coiled-coil conformation; sequence EKEQKKEDHY…INKEQVSTAS (141 aa).

The protein belongs to the GYP5 family. Interacts with GYL1 and RVS167; and is part of SEC4-containing complexes.

Its subcellular location is the cytoplasm. It is found in the bud. The protein resides in the bud neck. In terms of biological role, GTPase-activating protein which accelerates the GTP hydrolysis rate of YPT1 and SEC4. Involved in ER to Golgi trafficking and polarized exocytosis. The chain is GTPase-activating protein GYP5 (GYP5) from Saccharomyces cerevisiae (strain ATCC 204508 / S288c) (Baker's yeast).